The following is an 832-amino-acid chain: Ventricular zone-expressed PH domain-containing protein homolog 1 (832 aa).

An interaction with TGFBR1 region spans residues 201–319 (AELLALMSQL…RYLVSQLANM (119 aa)). Residues 497–519 (DTHGSQLRNSSASHPSIIHSEPE) are disordered. The segment covering 499–510 (HGSQLRNSSASH) has biased composition (polar residues). The interaction with TGFBR1 stretch occupies residues 663 to 832 (ESTFPQQKDL…RESREVTTYL (170 aa)). A PH domain is found at 716–818 (QPLIEGKLKE…WLQCINVALA (103 aa)).

This sequence belongs to the MELT/VEPH family. Interacts with TGFBR1.

The protein localises to the cell membrane. Its function is as follows. Interacts with TGF-beta receptor type-1 (TGFBR1) and inhibits dissociation of activated SMAD2 from TGFBR1, impeding its nuclear accumulation and resulting in impaired TGF-beta signaling. May also affect FOXO, Hippo and Wnt signaling. This Rattus norvegicus (Rat) protein is Ventricular zone-expressed PH domain-containing protein homolog 1 (Veph1).